A 387-amino-acid chain; its full sequence is Protein TsgA homolog (387 aa).

12 helical membrane passes run 11-31 (WISFFSYAFTGALIVITGMIM), 47-67 (NIFTFLNAGILISIFLNSWLI), 76-96 (LIFGFLFSIIAILGIVFSTSI), 101-121 (INIFILGLVSGITMSIGTFII), 134-154 (LLLTDSFFSMSGMIFPIISAY), 160-180 (ILWYWIYVFLGIIYFLIFILT), 205-225 (IILLSISALLYILGQLSFISW), 243-263 (VLVSNFWMAYMIGMWCFSFII), 271-291 (MFIFLTGSSSVLMYCFIYSKS), 299-319 (IISLGFFSSAIYTIIITLASL), 331-351 (LILFFGTIGTLLTFIITSPIV), and 358-378 (TTLIFSNVLYVIVFFLSCIIF).

The protein belongs to the major facilitator superfamily. TsgA family.

The protein localises to the cell membrane. The polypeptide is Protein TsgA homolog (Buchnera aphidicola subsp. Schizaphis graminum (strain Sg)).